Consider the following 1577-residue polypeptide: Vacuolar protein sorting/targeting protein PEP1 (1577 aa).

An N-terminal signal peptide occupies residues 1–21 (MILLHFVYSLWALLLIPLINA). The Lumenal portion of the chain corresponds to 22 to 1391 (EEFTPKVTKT…EFKEKYSVSA (1370 aa)). BNR repeat units follow at residues 58-68 (ISFDDGETWEK) and 101-111 (YITNDQGKSWE). Residues Asn121 and Asn168 are each glycosylated (N-linked (GlcNAc...) asparagine). BNR repeat units lie at residues 179 to 187 (SNDGGKSFS) and 414 to 423 (ISVDNGLTWT). A glycan (N-linked (GlcNAc...) asparagine) is linked at Asn445. 3 BNR repeats span residues 485 to 495 (FISRDGGLTWK), 531 to 541 (YYSLDQGKTWT), and 762 to 771 (YISHDGGQTI). Asn791 carries N-linked (GlcNAc...) asparagine glycosylation. One copy of the BNR 8 repeat lies at 859 to 869 (YLTNDGGETFT). Asn1008 is a glycosylation site (N-linked (GlcNAc...) asparagine). 2 BNR repeats span residues 1141-1150 (FFTTDGGETW) and 1183-1192 (YSTDFGKTWK). Asn1301 carries an N-linked (GlcNAc...) asparagine glycan. The helical transmembrane segment at 1392–1412 (GPFAFIFISILLIIFFAAWFV) threads the bilayer. The Cytoplasmic portion of the chain corresponds to 1413-1577 (YDRGIRRNGG…DSTAPSNENQ (165 aa)). The interval 1531 to 1577 (DDVPTLEEEHTSYTDQPTTTDVPDALPEGNEENIDRPDSTAPSNENQ) is disordered.

This sequence belongs to the VPS10-related sortilin family.

The protein localises to the golgi apparatus. Its subcellular location is the trans-Golgi network membrane. It is found in the prevacuolar compartment membrane. Its function is as follows. Functions as a sorting receptor in the Golgi compartment required for the intracellular sorting and delivery of soluble vacuolar proteins, like carboxypeptidase Y (CPY) and proteinase A. Executes multiple rounds of sorting by cycling between the late Golgi and a prevacuolar endosome-like compartment. Binds the Golgi-modified P2 form of CPY, and this interaction is dependent on the presence of an intact CPY vacuolar protein sorting signal. The chain is Vacuolar protein sorting/targeting protein PEP1 (PEP1) from Saccharomyces cerevisiae (strain Lalvin EC1118 / Prise de mousse) (Baker's yeast).